The sequence spans 165 residues: LOB domain-containing protein 3 (165 aa).

The 103-residue stretch at 13-115 (SPCAGCKLLR…TQLAFAQAEL (103 aa)) folds into the LOB domain.

It belongs to the LOB domain-containing protein family. Expressed in young shoots, roots, stems, leaves and flowers. At the bases of lateral organs formed from vegetative, inflorescence, and floral meristems.

The protein localises to the nucleus. The chain is LOB domain-containing protein 3 (LBD3) from Arabidopsis thaliana (Mouse-ear cress).